Here is a 359-residue protein sequence, read N- to C-terminus: MSCSHLSTAWSSSALASSASTTRRRSPPRSGLLVRCSLRELRTRIDSVRNTQKITEAMKLVAAAKVRRAQEAVVSSRPFSEALVEVLYNMNQEIQTEDIDLPLTRTRPVKKVALVVLTGERGLCGSFNNNVLKKAETRIDELKQLGLQYTVVSVGKKGNAYFQRRPYIPLERDLEVSSVPTVKDSQAICDLVYSLFVSEEVDKVELLYSKFVSLVRSDPIIQTLLPMSPKGEICDVNGVCVDATEDELFRLTTKEGKLTVEREKVKIETQPFSPVVQFEQDPVQILDALLPLYLNSQILRALQESLASELAARMSAMSSATDNAIELRKNLSIAYNRQRQAKITGEILEIVAGADALAG.

A chloroplast-targeting transit peptide spans 1 to 35 (MSCSHLSTAWSSSALASSASTTRRRSPPRSGLLVR). Cys-124 is a catalytic residue. Residues Cys-234 and Cys-240 are joined by a disulfide bond.

It belongs to the ATPase gamma chain family. As to quaternary structure, F-type ATPases have 2 components, CF(1) - the catalytic core - and CF(0) - the membrane proton channel. CF(1) has five subunits: alpha(3), beta(3), gamma(1), delta(1), epsilon(1). CF(0) has four main subunits: a, b, b' and c.

It is found in the plastid. It localises to the chloroplast thylakoid membrane. Produces ATP from ADP in the presence of a proton gradient across the membrane. The gamma chain is believed to be important in regulating ATPase activity and the flow of protons through the CF(0) complex. In terms of biological role, inceptin is a proteolytic fragment produced by insect larvae that previously ingested the protein. This peptide mediate plant perception of herbivory through the induction of volatile, phenylpropanoid and protease inhibitor defenses such as ethylene, jasmonic acid and salicylic acid for example. The sequence is that of ATP synthase subunit gamma, chloroplastic from Zea mays (Maize).